Reading from the N-terminus, the 443-residue chain is Serine/threonine-protein phosphatase 2A 55 kDa regulatory subunit B beta isoform (443 aa).

WD repeat units follow at residues 22–61 (TEAD…KNQV), 87–128 (EIEE…KRPE), 171–209 (AHTY…QSFN), and 220–260 (ELTE…LCDR). Position 275 is a phosphoserine (Ser275). 3 WD repeats span residues 279 to 317 (EIIS…RPVE), 334 to 375 (ENDC…DVTL), and 410 to 442 (DFSK…QDKV). Tyr295 carries the phosphotyrosine modification. Residue Thr298 is modified to Phosphothreonine.

It belongs to the phosphatase 2A regulatory subunit B family. In terms of assembly, PP2A consists of a common heterodimeric core enzyme, composed of a 36 kDa catalytic subunit (subunit C) and a 65 kDa constant regulatory subunit (PR65 or subunit A), that associates with a variety of regulatory subunits. Proteins that associate with the core dimer include three families of regulatory subunits B (the R2/B/PR55/B55, R3/B''/PR72/PR130/PR59 and R5/B'/B56 families), the 48 kDa variable regulatory subunit, viral proteins, and cell signaling molecules. Interacts with IER5 (via N- and C-terminal regions). Interacts with TOMM22. Expressed in the brain. Isoform 1 and isoform 2 are expressed in the forbrain. Isoform 1 is more strongly expressed than isoform 2 in the olfactory bulb. Isoform 1 and isoform 2 are weakly expressed in the cerebellum. Isoform 1 is expressed in the testis. Isoform 2 expression is undetectable at birth rising to adult level at day 14.

It localises to the cytoplasm. The protein resides in the cytoskeleton. It is found in the membrane. Its subcellular location is the mitochondrion. The protein localises to the mitochondrion outer membrane. Its function is as follows. The B regulatory subunit might modulate substrate selectivity and catalytic activity, and might also direct the localization of the catalytic enzyme to a particular subcellular compartment. Within the PP2A holoenzyme complex, isoform 2 is required to promote proapoptotic activity. Isoform 2 regulates neuronal survival through the mitochondrial fission and fusion balance. This Rattus norvegicus (Rat) protein is Serine/threonine-protein phosphatase 2A 55 kDa regulatory subunit B beta isoform (Ppp2r2b).